Here is a 1979-residue protein sequence, read N- to C-terminus: Repetitive organellar protein (1979 aa).

Basic residues predominate over residues 1 to 12 (MVFTFKNKKKKK). Disordered regions lie at residues 1–42 (MVFT…DSWY) and 54–116 (TKYK…NNYS). 2 stretches are compositionally biased toward basic and acidic residues: residues 13 to 24 (EASSDKVSKESF) and 31 to 42 (NNEKREKSDSWY). Positions 68–114 (EDIINNNNNNNNDNNNDNNNDNNNDNNNDNNNDNNNENNNDNNNFNN) are enriched in low complexity. Coiled-coil stretches lie at residues 127 to 366 (DNEL…LKDE), 412 to 666 (LKVY…EMEL), 693 to 876 (LKES…KKKQ), 992 to 1094 (KKKH…YKTI), 1126 to 1307 (VDKI…MNIK), and 1398 to 1467 (IANY…LTSQ).

Its subcellular location is the host cell membrane. This is Repetitive organellar protein from Plasmodium falciparum (isolate 3D7).